The primary structure comprises 153 residues: Putative OPA3-like protein CG43998 (153 aa).

A coiled-coil region spans residues E101 to K153.

It belongs to the OPA3 family.

The polypeptide is Putative OPA3-like protein CG43998 (Drosophila melanogaster (Fruit fly)).